The chain runs to 386 residues: 2,3-diketo-5-methylthiopentyl-1-phosphate enolase (386 aa).

Lys-85 acts as the Proton acceptor in catalysis. Residues Lys-131, 157–160, His-248, Gly-316, and 338–339 each bind substrate; these read KDDE and GT. Residues Lys-157, Asp-159, and Glu-160 each contribute to the Mg(2+) site. Residue Lys-157 is modified to N6-carboxylysine.

It belongs to the RuBisCO large chain family. Type IV subfamily. In terms of assembly, homodimer. Mg(2+) is required as a cofactor.

It catalyses the reaction 5-methylsulfanyl-2,3-dioxopentyl phosphate = 2-hydroxy-5-methylsulfanyl-3-oxopent-1-enyl phosphate. The protein operates within amino-acid biosynthesis; L-methionine biosynthesis via salvage pathway; L-methionine from S-methyl-5-thio-alpha-D-ribose 1-phosphate: step 3/6. Its function is as follows. Catalyzes the enolization of 2,3-diketo-5-methylthiopentyl-1-phosphate (DK-MTP-1-P) into 2-hydroxy-3-keto-5-methylthiopentenyl-1-phosphate (HK-MTPenyl-1-P). This chain is 2,3-diketo-5-methylthiopentyl-1-phosphate enolase, found in Microcystis aeruginosa (strain NIES-843 / IAM M-2473).